Consider the following 467-residue polypeptide: Nodulation protein T (467 aa).

Positions 1–17 (MRFTRYTTPFFSLLLSG) are cleaved as a signal peptide. Cys18 carries N-palmitoyl cysteine lipidation. The S-diacylglycerol cysteine moiety is linked to residue Cys18.

This sequence belongs to the outer membrane factor (OMF) (TC 1.B.17) family.

The protein localises to the cell membrane. In Rhizobium leguminosarum bv. trifolii, this protein is Nodulation protein T (nodT).